The following is a 555-amino-acid chain: Dihydroxy-acid dehydratase (555 aa).

Asp-78 contacts Mg(2+). Position 119 (Cys-119) interacts with [2Fe-2S] cluster. Residues Asp-120 and Lys-121 each coordinate Mg(2+). Lys-121 is modified (N6-carboxylysine). Residue Cys-195 coordinates [2Fe-2S] cluster. Mg(2+) is bound at residue Glu-444. Ser-470 (proton acceptor) is an active-site residue.

This sequence belongs to the IlvD/Edd family. Homodimer. The cofactor is [2Fe-2S] cluster. Mg(2+) serves as cofactor.

The catalysed reaction is (2R)-2,3-dihydroxy-3-methylbutanoate = 3-methyl-2-oxobutanoate + H2O. It catalyses the reaction (2R,3R)-2,3-dihydroxy-3-methylpentanoate = (S)-3-methyl-2-oxopentanoate + H2O. The protein operates within amino-acid biosynthesis; L-isoleucine biosynthesis; L-isoleucine from 2-oxobutanoate: step 3/4. It participates in amino-acid biosynthesis; L-valine biosynthesis; L-valine from pyruvate: step 3/4. Functionally, functions in the biosynthesis of branched-chain amino acids. Catalyzes the dehydration of (2R,3R)-2,3-dihydroxy-3-methylpentanoate (2,3-dihydroxy-3-methylvalerate) into 2-oxo-3-methylpentanoate (2-oxo-3-methylvalerate) and of (2R)-2,3-dihydroxy-3-methylbutanoate (2,3-dihydroxyisovalerate) into 2-oxo-3-methylbutanoate (2-oxoisovalerate), the penultimate precursor to L-isoleucine and L-valine, respectively. This chain is Dihydroxy-acid dehydratase, found in Dehalococcoides mccartyi (strain CBDB1).